Here is a 299-residue protein sequence, read N- to C-terminus: Protease HtpX homolog (299 aa).

2 helical membrane passes run 5-25 and 44-64; these read IFLFILTNILVITTIGIVLSV and MVALLVFSAVVGFVGSFMSLA. Position 155 (H155) interacts with Zn(2+). The active site involves E156. Residue H159 coordinates Zn(2+). Transmembrane regions (helical) follow at residues 170 to 190 and 205 to 225; these read LLQGIVNTFVVFLSRIAAWIA and FIAVIVFQIIFSVLGSLVVFA. E231 is a Zn(2+) binding site.

This sequence belongs to the peptidase M48B family. The cofactor is Zn(2+).

Its subcellular location is the cell membrane. This chain is Protease HtpX homolog, found in Bacillus pumilus (strain SAFR-032).